The chain runs to 498 residues: Cytochrome P450 71B24 (498 aa).

Residues 1-21 (MSILLYFIALLSLIIIKKIKD) traverse the membrane as a helical segment. C442 provides a ligand contact to heme.

It belongs to the cytochrome P450 family. Heme serves as cofactor.

The protein resides in the membrane. The sequence is that of Cytochrome P450 71B24 (CYP71B24) from Arabidopsis thaliana (Mouse-ear cress).